We begin with the raw amino-acid sequence, 754 residues long: Polyribonucleotide nucleotidyltransferase (754 aa).

Residues Asp525 and Asp531 each coordinate Mg(2+). The region spanning 591–650 (PRITTIKVPVDKIGEVIGPKGKMINSITEETGASISIEDDGTVFVGASNGEAAQAAIDKI) is the KH domain. The 70-residue stretch at 662 to 731 (GERFLGTVVK…NRGKISLVLV (70 aa)) folds into the S1 motif domain.

Belongs to the polyribonucleotide nucleotidyltransferase family. Mg(2+) is required as a cofactor.

The protein resides in the cytoplasm. It carries out the reaction RNA(n+1) + phosphate = RNA(n) + a ribonucleoside 5'-diphosphate. Involved in mRNA degradation. Catalyzes the phosphorolysis of single-stranded polyribonucleotides processively in the 3'- to 5'-direction. The polypeptide is Polyribonucleotide nucleotidyltransferase (Mycolicibacterium vanbaalenii (strain DSM 7251 / JCM 13017 / BCRC 16820 / KCTC 9966 / NRRL B-24157 / PYR-1) (Mycobacterium vanbaalenii)).